The sequence spans 1755 residues: Transposon Ty1-LR2 Gag-Pol polyprotein (1755 aa).

3 stretches are compositionally biased toward polar residues: residues 1-23 (MESQ…SVTS), 48-60 (TKAN…TPAS), and 127-152 (QSQF…GNTF). Disordered regions lie at residues 1-93 (MESQ…MMTQ), 126-174 (PQSQ…PPPM), and 352-421 (GSRN…SKST). Over residues 153 to 165 (TDSSSADSDMTST) the composition is skewed to low complexity. The tract at residues 299–401 (NNGIHINNKV…NSKSKTARAH (103 aa)) is RNA-binding. Residues 402 to 418 (NVSTSNNSPSTDNDSIS) show a composition bias toward low complexity. Phosphoserine is present on serine 416. Aspartate 461 functions as the For protease activity; shared with dimeric partner in the catalytic mechanism. The integrase-type zinc finger-like stretch occupies residues 583-640 (NVHTSESTRKYPYPFIHRMLAHANAPTIRYSLKNNTITYFNESDVDWSSAIDYQCPDC). Positions 660–835 (NSYEPFQYLH…AGLDISTLLP (176 aa)) constitute an Integrase catalytic domain. Positions 671 and 736 each coordinate Mg(2+). Disordered regions lie at residues 956-1087 (SKAV…ETEK), 1092-1111 (RSPS…NIVP), and 1130-1187 (DLPL…DNET). A compositionally biased stretch (low complexity) spans 960–969 (SPTDSTPPST). A compositionally biased stretch (polar residues) spans 1005–1015 (STPQISNIEST). The span at 1038-1053 (ESSHASKSKDFRHSDS) shows a compositional bias: basic and acidic residues. Polar residues-rich tracts occupy residues 1054–1082 (YSEN…QISD) and 1101–1111 (PENNSSHNIVP). A Bipartite nuclear localization signal motif is present at residues 1178–1212 (KKRSLEDNETEIKVSRDTWNTKNMRSLEPPRSKKR). The region spanning 1338–1476 (NNYYITQLDI…DILGLEIKYQ (139 aa)) is the Reverse transcriptase Ty1/copia-type domain. Mg(2+)-binding residues include aspartate 1346, aspartate 1427, aspartate 1428, aspartate 1610, glutamate 1652, and aspartate 1685. The region spanning 1610 to 1752 (DASYGNQPYY…IKTFKLLTNK (143 aa)) is the RNase H Ty1/copia-type domain.

In terms of assembly, the capsid protein forms a homotrimer, from which the VLPs are assembled. The protease is a homodimer, whose active site consists of two apposed aspartic acid residues. Initially, virus-like particles (VLPs) are composed of the structural unprocessed proteins Gag and Gag-Pol, and also contain the host initiator methionine tRNA (tRNA(i)-Met) which serves as a primer for minus-strand DNA synthesis, and a dimer of genomic Ty RNA. Processing of the polyproteins occurs within the particle and proceeds by an ordered pathway, called maturation. First, the protease (PR) is released by autocatalytic cleavage of the Gag-Pol polyprotein yielding capsid protein p45 and a Pol-p154 precursor protein. This cleavage is a prerequisite for subsequent processing of Pol-p154 at the remaining sites to release the mature structural and catalytic proteins. Maturation takes place prior to the RT reaction and is required to produce transposition-competent VLPs.

It is found in the cytoplasm. The protein localises to the nucleus. The catalysed reaction is DNA(n) + a 2'-deoxyribonucleoside 5'-triphosphate = DNA(n+1) + diphosphate. It carries out the reaction Endonucleolytic cleavage to 5'-phosphomonoester.. In terms of biological role, capsid protein (CA) is the structural component of the virus-like particle (VLP), forming the shell that encapsulates the retrotransposons dimeric RNA genome. The particles are assembled from trimer-clustered units and there are holes in the capsid shells that allow for the diffusion of macromolecules. CA also has nucleocapsid-like chaperone activity, promoting primer tRNA(i)-Met annealing to the multipartite primer-binding site (PBS), dimerization of Ty1 RNA and initiation of reverse transcription. The aspartyl protease (PR) mediates the proteolytic cleavages of the Gag and Gag-Pol polyproteins after assembly of the VLP. Its function is as follows. Reverse transcriptase/ribonuclease H (RT) is a multifunctional enzyme that catalyzes the conversion of the retro-elements RNA genome into dsDNA within the VLP. The enzyme displays a DNA polymerase activity that can copy either DNA or RNA templates, and a ribonuclease H (RNase H) activity that cleaves the RNA strand of RNA-DNA heteroduplexes during plus-strand synthesis and hydrolyzes RNA primers. The conversion leads to a linear dsDNA copy of the retrotransposon that includes long terminal repeats (LTRs) at both ends. Functionally, integrase (IN) targets the VLP to the nucleus, where a subparticle preintegration complex (PIC) containing at least integrase and the newly synthesized dsDNA copy of the retrotransposon must transit the nuclear membrane. Once in the nucleus, integrase performs the integration of the dsDNA into the host genome. The sequence is that of Transposon Ty1-LR2 Gag-Pol polyprotein (TY1B-LR2) from Saccharomyces cerevisiae (strain ATCC 204508 / S288c) (Baker's yeast).